Consider the following 461-residue polypeptide: Protein YIG1 (461 aa).

The segment at 58–80 (SNVGEDGGDVGNYSEEDDDGDEE) is disordered. The span at 71–80 (SEEDDDGDEE) shows a compositional bias: acidic residues.

The protein localises to the cytoplasm. It is found in the nucleus. Its function is as follows. Involved in the regulation of anaerobiotic glycerol metabolism. The polypeptide is Protein YIG1 (YIG1) (Saccharomyces cerevisiae (strain ATCC 204508 / S288c) (Baker's yeast)).